The following is a 300-amino-acid chain: 4-diphosphocytidyl-2-C-methyl-D-erythritol kinase (300 aa).

Lysine 22 is an active-site residue. Proline 105–serine 115 lines the ATP pocket. Aspartate 147 is a catalytic residue.

Belongs to the GHMP kinase family. IspE subfamily.

It carries out the reaction 4-CDP-2-C-methyl-D-erythritol + ATP = 4-CDP-2-C-methyl-D-erythritol 2-phosphate + ADP + H(+). The protein operates within isoprenoid biosynthesis; isopentenyl diphosphate biosynthesis via DXP pathway; isopentenyl diphosphate from 1-deoxy-D-xylulose 5-phosphate: step 3/6. Catalyzes the phosphorylation of the position 2 hydroxy group of 4-diphosphocytidyl-2C-methyl-D-erythritol. The sequence is that of 4-diphosphocytidyl-2-C-methyl-D-erythritol kinase from Colwellia psychrerythraea (strain 34H / ATCC BAA-681) (Vibrio psychroerythus).